The primary structure comprises 500 residues: Lysine--tRNA ligase (500 aa).

Mg(2+)-binding residues include E411 and E418.

The protein belongs to the class-II aminoacyl-tRNA synthetase family. In terms of assembly, homodimer. Mg(2+) is required as a cofactor.

It localises to the cytoplasm. It catalyses the reaction tRNA(Lys) + L-lysine + ATP = L-lysyl-tRNA(Lys) + AMP + diphosphate. The protein is Lysine--tRNA ligase of Actinobacillus pleuropneumoniae serotype 7 (strain AP76).